We begin with the raw amino-acid sequence, 77 residues long: MNLSFCVQALLLLWLSLTAVCGVPLMLPPDGKGLEEGNMRYLVKPRTSRTGPGAWQGGRRKFRRQRPRLSHKGPMPF.

Positions 1–22 (MNLSFCVQALLLLWLSLTAVCG) are cleaved as a signal peptide. The propeptide occupies 23–41 (VPLMLPPDGKGLEEGNMRY). The tract at residues 45–77 (PRTSRTGPGAWQGGRRKFRRQRPRLSHKGPMPF) is disordered. Residues 58–71 (GRRKFRRQRPRLSH) show a composition bias toward basic residues.

This sequence belongs to the apelin family. In terms of processing, several active peptides may be produced by proteolytic processing of the peptide precursor. As to expression, expressed in the lung, testis, ovary, uterus and mammary gland. Expressed in neurons in the thalamic paraventricular and hypothalamic supraoptic nuclei. The lung, testis and uterus mainly contain a large form that looks like apelin-36, whereas the mammary gland seems to contain 2 forms of apelin, a large form close to apelin-36 and a small form close to apelin-13 (at protein level). Widely expressed in the adult, with highest levels in the mammary gland of lactating animals, very high levels in the lung, intermediate levels in the spinal cord, ovary, adipose tissue, brain (neuronal cell bodies and fibers in the supraoptic and the paraventricular nuclei), heart and testis, and lowest levels in the pituitary gland, kidney, stomach, uterus and pancreas.

It localises to the secreted. The protein localises to the extracellular space. Its function is as follows. Peptide hormone that functions as endogenous ligand for the G-protein-coupled apelin receptor (APLNR/APJ), that plays a role in cadiovascular homeostasis. Functions as a balanced agonist activating both G(i) protein pathway and beta-arrestin pathway of APLNR. Downstream G proteins activation, apelin can inhibit cAMP production and activate key intracellular effectors such as ERKs. On the other hand, APLNR activation induces beta-arrestin recruitment to the membrane leading to desensitization and internalization of the receptor. Apelin blunts cardiac hypertrophic induction from APLNR on response to pathological stimuli, but also induces myocardial hypertrophy under normal conditions. Apelin-36 dissociates more hardly than (pyroglu)apelin-13 from APLNR. Involved in the regulation of cardiac precursor cell movements during gastrulation and heart morphogenesis. Has an inhibitory effect on cytokine production in response to T-cell receptor/CD3 cross-linking; the oral intake of apelin in the colostrum and the milk might therefore modulate immune responses in neonates. Plays a role in early coronary blood vessels formation. Mediates myocardial contractility in an ERK1/2-dependent manner. May also have a role in the central control of body fluid homeostasis by influencing vasopressin release and drinking behavior. The polypeptide is Apelin (Rattus norvegicus (Rat)).